A 324-amino-acid polypeptide reads, in one-letter code: UDP-N-acetylenolpyruvoylglucosamine reductase (324 aa).

In terms of domain architecture, FAD-binding PCMH-type spans 36-203 (FRAGGLAELM…TSVLFEGYPE (168 aa)). Arg183 is a catalytic residue. Ser232 (proton donor) is an active-site residue. Residue Glu302 is part of the active site.

The protein belongs to the MurB family. FAD is required as a cofactor.

The protein localises to the cytoplasm. The catalysed reaction is UDP-N-acetyl-alpha-D-muramate + NADP(+) = UDP-N-acetyl-3-O-(1-carboxyvinyl)-alpha-D-glucosamine + NADPH + H(+). It functions in the pathway cell wall biogenesis; peptidoglycan biosynthesis. Functionally, cell wall formation. The chain is UDP-N-acetylenolpyruvoylglucosamine reductase from Rhizobium johnstonii (strain DSM 114642 / LMG 32736 / 3841) (Rhizobium leguminosarum bv. viciae).